We begin with the raw amino-acid sequence, 48 residues long: Mating-type pheromone BAP1(2) (48 aa).

A Cysteine methyl ester modification is found at Cys45. A lipid anchor (S-farnesyl cysteine) is attached at Cys45. Residues 46–48 (VRG) constitute a propeptide, removed in mature form.

The protein localises to the cell membrane. Its function is as follows. Activates B-regulated development. This chain is Mating-type pheromone BAP1(2) (BAP1(2)), found in Schizophyllum commune (Split gill fungus).